The primary structure comprises 454 residues: Mitochondrial dynamics protein MID49 (454 aa).

The Mitochondrial intermembrane portion of the chain corresponds to 1 to 22 (MAEFSQKRGKRRGDEGLGSMVD). Residues 23-43 (FLLANARLVLGVGGAAVLGIA) traverse the membrane as a helical segment. The Cytoplasmic segment spans residues 44-454 (TLAVKRFIDR…SGLQEPEGLL (411 aa)). The segment at 76–119 (ATPHLQPRPPPAALSQPVLPLAPSSSAPEGPAKSDPEVTPQLSS) is disordered. Residues 88–108 (ALSQPVLPLAPSSSAPEGPAK) are compositionally biased toward low complexity.

The protein belongs to the MID49/MID51 family. Interacts with DNM1L.

Its subcellular location is the mitochondrion outer membrane. Its function is as follows. Mitochondrial outer membrane protein which regulates mitochondrial organization. It is required for mitochondrial fission and promotes the recruitment and association of the fission mediator dynamin-related protein 1 (DNM1L) to the mitochondrial surface independently of the mitochondrial fission FIS1 and MFF proteins. Regulates DNM1L GTPase activity. This is Mitochondrial dynamics protein MID49 (MIEF2) from Pongo abelii (Sumatran orangutan).